Here is a 1015-residue protein sequence, read N- to C-terminus: Probable beta-galactosidase B (1015 aa).

Positions 1–20 (MAHIYRLLLLLLSNLWFSTA) are cleaved as a signal peptide. N-linked (GlcNAc...) asparagine glycosylation is present at N23. Residue Y90 participates in substrate binding. Residues N99 and N100 are each glycosylated (N-linked (GlcNAc...) asparagine). Residues N135, A136, and E137 each coordinate substrate. The N-linked (GlcNAc...) asparagine glycan is linked to N172. N195 is a binding site for substrate. E196 functions as the Proton donor in the catalytic mechanism. The N-linked (GlcNAc...) asparagine glycan is linked to N211. Residue Y265 coordinates substrate. C271 and C324 form a disulfide bridge. Catalysis depends on E308, which acts as the Nucleophile. Y373 is a substrate binding site. 7 N-linked (GlcNAc...) asparagine glycosylation sites follow: N411, N456, N554, N679, N735, N775, and N821.

It belongs to the glycosyl hydrolase 35 family.

The protein localises to the secreted. It carries out the reaction Hydrolysis of terminal non-reducing beta-D-galactose residues in beta-D-galactosides.. Functionally, cleaves beta-linked terminal galactosyl residues from gangliosides, glycoproteins, and glycosaminoglycans. The polypeptide is Probable beta-galactosidase B (lacB) (Aspergillus fumigatus (strain CBS 144.89 / FGSC A1163 / CEA10) (Neosartorya fumigata)).